A 103-amino-acid chain; its full sequence is Large ribosomal subunit protein uL24 (103 aa).

This sequence belongs to the universal ribosomal protein uL24 family. Part of the 50S ribosomal subunit.

In terms of biological role, one of two assembly initiator proteins, it binds directly to the 5'-end of the 23S rRNA, where it nucleates assembly of the 50S subunit. One of the proteins that surrounds the polypeptide exit tunnel on the outside of the subunit. This Ruthia magnifica subsp. Calyptogena magnifica protein is Large ribosomal subunit protein uL24.